We begin with the raw amino-acid sequence, 78 residues long: Acyl carrier protein (78 aa).

The 76-residue stretch at 2-77 folds into the Carrier domain; sequence SDTAERIKKI…DAVSYIDEHK (76 aa). At S37 the chain carries O-(pantetheine 4'-phosphoryl)serine.

The protein belongs to the acyl carrier protein (ACP) family. In terms of processing, 4'-phosphopantetheine is transferred from CoA to a specific serine of apo-ACP by AcpS. This modification is essential for activity because fatty acids are bound in thioester linkage to the sulfhydryl of the prosthetic group.

The protein localises to the cytoplasm. Its pathway is lipid metabolism; fatty acid biosynthesis. Its function is as follows. Carrier of the growing fatty acid chain in fatty acid biosynthesis. This is Acyl carrier protein from Zymomonas mobilis subsp. mobilis (strain ATCC 31821 / ZM4 / CP4).